A 489-amino-acid polypeptide reads, in one-letter code: Cobyric acid synthase (489 aa).

A GATase cobBQ-type domain is found at 247–439 (ALKVVVPVLP…IHGVFDEPAA (193 aa)). Cys-328 (nucleophile) is an active-site residue. His-431 is an active-site residue.

The protein belongs to the CobB/CobQ family. CobQ subfamily.

The protein operates within cofactor biosynthesis; adenosylcobalamin biosynthesis. Its function is as follows. Catalyzes amidations at positions B, D, E, and G on adenosylcobyrinic A,C-diamide. NH(2) groups are provided by glutamine, and one molecule of ATP is hydrogenolyzed for each amidation. The chain is Cobyric acid synthase from Marinobacter nauticus (strain ATCC 700491 / DSM 11845 / VT8) (Marinobacter aquaeolei).